Reading from the N-terminus, the 341-residue chain is Probable sulfurtransferase (341 aa).

Zn(2+) contacts are provided by C40, C42, C58, and C61. Residue G88 coordinates ATP. Residues C176 and C179 each contribute to the [4Fe-4S] cluster site. The ATP site is built by R183 and G202. C267 provides a ligand contact to [4Fe-4S] cluster. Residues C316, C319, C328, and C331 each coordinate Zn(2+).

This sequence belongs to the TtcA family. Requires [4Fe-4S] cluster as cofactor. It depends on Mg(2+) as a cofactor.

In Methanocaldococcus jannaschii (strain ATCC 43067 / DSM 2661 / JAL-1 / JCM 10045 / NBRC 100440) (Methanococcus jannaschii), this protein is Probable sulfurtransferase.